The chain runs to 315 residues: Malate dehydrogenase (315 aa).

NAD(+) contacts are provided by residues 10–15 and aspartate 34; that span reads GAGNVG. Arginine 85 and arginine 91 together coordinate substrate. NAD(+)-binding positions include asparagine 98 and 121 to 123; that span reads VSN. Substrate is bound by residues asparagine 123 and arginine 154. The Proton acceptor role is filled by histidine 178.

This sequence belongs to the LDH/MDH superfamily. MDH type 3 family.

The catalysed reaction is (S)-malate + NAD(+) = oxaloacetate + NADH + H(+). Its function is as follows. Catalyzes the reversible oxidation of malate to oxaloacetate. The chain is Malate dehydrogenase from Rhodopirellula baltica (strain DSM 10527 / NCIMB 13988 / SH1).